A 130-amino-acid polypeptide reads, in one-letter code: MSMQDPIADMLTRIRNGQAASKVAISMPSSKLKVAIANVLAAEGYIESVKVLEGAKPELEITLKYFQGKPVVESIQRVSRPGLRIYKRKDELPKVMGGLGVAVVSTSKGVMTDRAARQAGLGGEIICYVA.

The protein belongs to the universal ribosomal protein uS8 family. Part of the 30S ribosomal subunit. Contacts proteins S5 and S12.

Functionally, one of the primary rRNA binding proteins, it binds directly to 16S rRNA central domain where it helps coordinate assembly of the platform of the 30S subunit. The protein is Small ribosomal subunit protein uS8 of Mannheimia succiniciproducens (strain KCTC 0769BP / MBEL55E).